We begin with the raw amino-acid sequence, 479 residues long: Sulfate adenylyltransferase subunit 1 (479 aa).

One can recognise a tr-type G domain in the interval 25-239; the sequence is KSLLRFLTCG…EVLETVDIQR (215 aa). A G1 region spans residues 34-41; sequence GSVDDGKS. 34 to 41 lines the GTP pocket; it reads GSVDDGKS. Residues 92–96 are G2; sequence GITID. Positions 113–116 are G3; it reads DTPG. Residues 113-117 and 168-171 each bind GTP; these read DTPGH and NKMD. The tract at residues 168 to 171 is G4; that stretch reads NKMD. Positions 206–208 are G5; sequence SAL.

It belongs to the TRAFAC class translation factor GTPase superfamily. Classic translation factor GTPase family. CysN/NodQ subfamily. In terms of assembly, heterodimer composed of CysD, the smaller subunit, and CysN.

The enzyme catalyses sulfate + ATP + H(+) = adenosine 5'-phosphosulfate + diphosphate. The protein operates within sulfur metabolism; hydrogen sulfide biosynthesis; sulfite from sulfate: step 1/3. With CysD forms the ATP sulfurylase (ATPS) that catalyzes the adenylation of sulfate producing adenosine 5'-phosphosulfate (APS) and diphosphate, the first enzymatic step in sulfur assimilation pathway. APS synthesis involves the formation of a high-energy phosphoric-sulfuric acid anhydride bond driven by GTP hydrolysis by CysN coupled to ATP hydrolysis by CysD. The protein is Sulfate adenylyltransferase subunit 1 of Salmonella choleraesuis (strain SC-B67).